The following is a 404-amino-acid chain: MGALKMRCQCFPLPYLSLLALLLLNLSLTRAETLWTANVNYSYVYDNKTYGEEGEIGVFGQDSPIERAAGLVVLPKSEKLYTACKDNVNFSVPSGWTGPWIALIQRGGGCTFTEKINRAAERGARAVVVYNNGIDNEVFEMSHPGTKDTVAIMIGNLKGNEIVDLIKGGMQVTMVIEVGRKHGSWINHYSIFFVSVSFFIVTAATVGYFIFYSARRWRLTRAQNKKQKRLKAEAKKAIGKLQLRTIKQGDKVLGPDGDSCAVCIEPYKPSDVVRILTCNHFFHKNCIDPWLLEHRTCPMCKCDILKSLGIAEDEEEGTSVAIPSVSSELQRSTVQITEEENHSETASSGYASVRGGDEQVDEGQHIYENTELVHEASATSIEVLPHMDNPGFESEDVHVHEMKS.

The N-terminal stretch at 1–31 is a signal peptide; it reads MGALKMRCQCFPLPYLSLLALLLLNLSLTRA. The PA domain occupies 62-166; that stretch reads DSPIERAAGL…LKGNEIVDLI (105 aa). The helical transmembrane segment at 191 to 211 threads the bilayer; that stretch reads IFFVSVSFFIVTAATVGYFIF. An RING-type; atypical zinc finger spans residues 260–301; sequence CAVCIEPYKPSDVVRILTCNHFFHKNCIDPWLLEHRTCPMCK. The interval 336-356 is disordered; the sequence is ITEEENHSETASSGYASVRGG.

Auto-ubiquitinated. As to expression, expressed in the cement gland, cranial placodes, and the pronephros.

It is found in the endomembrane system. It localises to the cytoplasm. The protein resides in the perinuclear region. The enzyme catalyses S-ubiquitinyl-[E2 ubiquitin-conjugating enzyme]-L-cysteine + [acceptor protein]-L-lysine = [E2 ubiquitin-conjugating enzyme]-L-cysteine + N(6)-ubiquitinyl-[acceptor protein]-L-lysine.. Its pathway is protein modification; protein ubiquitination. Its function is as follows. E3 ubiquitin-protein ligase that catalyzes polyubiquitin chains. Converts epidermis into cement gland and neural tissue in whole embryos. This Xenopus laevis (African clawed frog) protein is E3 ubiquitin-protein ligase RNF128 (rnf128).